The following is a 611-amino-acid chain: Dual specificity protein phosphatase CDC14AB (611 aa).

The interval 23–178 is a; it reads DLLGASEFIK…ALQHGFLNFE (156 aa). The linker stretch occupies residues 179–192; sequence TFDVNEYEHYERVE. Residues 193 to 359 are b; it reads NGDLNWITPG…HGDSLRSKQR (167 aa). The 159-residue stretch at 194 to 352 folds into the Tyrosine-protein phosphatase domain; sequence GDLNWITPGK…KQASLWAHGD (159 aa). Cys-294 functions as the Phosphocysteine intermediate in the catalytic mechanism. The tract at residues 408-611 is disordered; that stretch reads KLRALKGRRQ…PSLQSEYVQY (204 aa). A compositionally biased stretch (low complexity) spans 456–490; the sequence is SPLKSSKVPASSSSSSSSSSVSASAKRIGRSSSSS. The segment covering 491–511 has biased composition (polar residues); the sequence is TNLKSTRLASSLGNLYEPNTE. Over residues 512 to 553 the composition is skewed to low complexity; that stretch reads SISSGKPPSPSSFTPHPVRTTYNYHYEVNNNNNQYSTTSSPS. Polar residues-rich tracts occupy residues 554–569 and 591–611; these read KSLG…SGAS and GLST…YVQY.

This sequence belongs to the protein-tyrosine phosphatase family. Non-receptor class CDC14 subfamily.

It localises to the nucleus. The protein localises to the cytoplasm. Its subcellular location is the cytoskeleton. It is found in the microtubule organizing center. The protein resides in the centrosome. It localises to the spindle pole. The protein localises to the spindle. Its subcellular location is the cell projection. It is found in the kinocilium. It carries out the reaction O-phospho-L-tyrosyl-[protein] + H2O = L-tyrosyl-[protein] + phosphate. The enzyme catalyses O-phospho-L-seryl-[protein] + H2O = L-seryl-[protein] + phosphate. The catalysed reaction is O-phospho-L-threonyl-[protein] + H2O = L-threonyl-[protein] + phosphate. Functionally, dual-specificity phosphatase. Required for centrosome separation and productive cytokinesis during cell division. Dephosphorylates SIRT2 around early anaphase. May dephosphorylate the APC subunit FZR1/CDH1, thereby promoting APC-FZR1 dependent degradation of mitotic cyclins and subsequent exit from mitosis. This chain is Dual specificity protein phosphatase CDC14AB (cdc14ab), found in Danio rerio (Zebrafish).